A 446-amino-acid polypeptide reads, in one-letter code: Tubulin beta chain (446 aa).

GTP is bound by residues glutamine 11, glutamate 69, serine 138, glycine 142, threonine 143, glycine 144, asparagine 204, and asparagine 226. Mg(2+) is bound at residue glutamate 69. Residues 425-446 (YQEASISEGEEEYPEEVSNEEE) are disordered. The span at 432-446 (EGEEEYPEEVSNEEE) shows a compositional bias: acidic residues.

The protein belongs to the tubulin family. As to quaternary structure, dimer of alpha and beta chains. A typical microtubule is a hollow water-filled tube with an outer diameter of 25 nm and an inner diameter of 15 nM. Alpha-beta heterodimers associate head-to-tail to form protofilaments running lengthwise along the microtubule wall with the beta-tubulin subunit facing the microtubule plus end conferring a structural polarity. Microtubules usually have 13 protofilaments but different protofilament numbers can be found in some organisms and specialized cells. Mg(2+) is required as a cofactor.

It is found in the cytoplasm. The protein localises to the cytoskeleton. In terms of biological role, tubulin is the major constituent of microtubules, a cylinder consisting of laterally associated linear protofilaments composed of alpha- and beta-tubulin heterodimers. Microtubules grow by the addition of GTP-tubulin dimers to the microtubule end, where a stabilizing cap forms. Below the cap, tubulin dimers are in GDP-bound state, owing to GTPase activity of alpha-tubulin. In Blumeria hordei (Barley powdery mildew), this protein is Tubulin beta chain (TUB2).